A 340-amino-acid chain; its full sequence is Uroporphyrinogen decarboxylase (340 aa).

Substrate contacts are provided by residues 21–25, phenylalanine 40, aspartate 71, tyrosine 147, serine 202, and histidine 316; that span reads RQAGR.

It belongs to the uroporphyrinogen decarboxylase family. In terms of assembly, homodimer.

It localises to the cytoplasm. The catalysed reaction is uroporphyrinogen III + 4 H(+) = coproporphyrinogen III + 4 CO2. Its pathway is porphyrin-containing compound metabolism; protoporphyrin-IX biosynthesis; coproporphyrinogen-III from 5-aminolevulinate: step 4/4. Its function is as follows. Catalyzes the decarboxylation of four acetate groups of uroporphyrinogen-III to yield coproporphyrinogen-III. The sequence is that of Uroporphyrinogen decarboxylase from Wolinella succinogenes (strain ATCC 29543 / DSM 1740 / CCUG 13145 / JCM 31913 / LMG 7466 / NCTC 11488 / FDC 602W) (Vibrio succinogenes).